An 804-amino-acid chain; its full sequence is Lon protease 2 (804 aa).

The region spanning 6-199 (MPVCPVRGSV…AVLVLLEAEL (194 aa)) is the Lon N-terminal domain. 362-369 (GPPGVGKT) serves as a coordination point for ATP. In terms of domain architecture, Lon proteolytic spans 598 to 779 (EPQVGVATGM…DQVLDLALVG (182 aa)). Catalysis depends on residues Ser685 and Lys728.

The protein belongs to the peptidase S16 family. As to quaternary structure, homohexamer. Organized in a ring with a central cavity.

Its subcellular location is the cytoplasm. The catalysed reaction is Hydrolysis of proteins in presence of ATP.. ATP-dependent serine protease that mediates the selective degradation of mutant and abnormal proteins as well as certain short-lived regulatory proteins. Required for cellular homeostasis and for survival from DNA damage and developmental changes induced by stress. Degrades polypeptides processively to yield small peptide fragments that are 5 to 10 amino acids long. Binds to DNA in a double-stranded, site-specific manner. In Thermus thermophilus (strain ATCC BAA-163 / DSM 7039 / HB27), this protein is Lon protease 2.